The following is a 124-amino-acid chain: MRHYEIVFIVHPDQSEQVPAMIERYKQLVTSQNGNVHRVEDWGRRQMAYMIQKLAKAHYVCLNIECGKETLAELEHAFKFNDAVLRHLIVQTKKAETAPSPMMKEVQREEARKAAQTTTEGQAA.

A disordered region spans residues Glu-96 to Ala-124. The span at Ala-115–Ala-124 shows a compositional bias: polar residues.

Belongs to the bacterial ribosomal protein bS6 family.

Functionally, binds together with bS18 to 16S ribosomal RNA. The protein is Small ribosomal subunit protein bS6 of Cupriavidus necator (strain ATCC 17699 / DSM 428 / KCTC 22496 / NCIMB 10442 / H16 / Stanier 337) (Ralstonia eutropha).